Consider the following 683-residue polypeptide: Elongation factor G 2 (683 aa).

The 276-residue stretch at 4 to 279 folds into the tr-type G domain; it reads QQMRNIGIMA…AVVEYLPAPQ (276 aa). GTP is bound by residues 13 to 20, 77 to 81, and 131 to 134; these read AHVDAGKT, DTPGH, and NKMD.

The protein belongs to the TRAFAC class translation factor GTPase superfamily. Classic translation factor GTPase family. EF-G/EF-2 subfamily.

Its subcellular location is the cytoplasm. Catalyzes the GTP-dependent ribosomal translocation step during translation elongation. During this step, the ribosome changes from the pre-translocational (PRE) to the post-translocational (POST) state as the newly formed A-site-bound peptidyl-tRNA and P-site-bound deacylated tRNA move to the P and E sites, respectively. Catalyzes the coordinated movement of the two tRNA molecules, the mRNA and conformational changes in the ribosome. The polypeptide is Elongation factor G 2 (fusB) (Treponema pallidum (strain Nichols)).